A 247-amino-acid chain; its full sequence is Carboxy-S-adenosyl-L-methionine synthase (247 aa).

Residues Tyr-39, 64–66 (GCS), 89–90 (DN), 117–118 (DI), Asn-132, and Arg-199 contribute to the S-adenosyl-L-methionine site.

Belongs to the class I-like SAM-binding methyltransferase superfamily. Cx-SAM synthase family. In terms of assembly, homodimer.

It catalyses the reaction prephenate + S-adenosyl-L-methionine = carboxy-S-adenosyl-L-methionine + 3-phenylpyruvate + H2O. Catalyzes the conversion of S-adenosyl-L-methionine (SAM) to carboxy-S-adenosyl-L-methionine (Cx-SAM). This Salmonella enteritidis PT4 (strain P125109) protein is Carboxy-S-adenosyl-L-methionine synthase.